The following is a 1090-amino-acid chain: Aminopeptidase-like protein AC3.5 (1090 aa).

The Cytoplasmic segment spans residues 1–77; the sequence is MEDVDLGKDR…KPKKRIACSP (77 aa). A compositionally biased stretch (low complexity) spans 21–33; it reads GNGSASNLNNRNN. The tract at residues 21 to 71 is disordered; the sequence is GNGSASNLNNRNNIPLSEKAAKEPLQTQPQEAPPAPKPKVQKQKPPVKPKK. A compositionally biased stretch (basic residues) spans 59–71; that stretch reads KVQKQKPPVKPKK. Residues 78 to 98 form a helical; Signal-anchor for type II membrane protein membrane-spanning segment; sequence GSAICLFLLAVAAIIFAAFLG. Over 99–1090 the chain is Lumenal; it reads HYLTKQNYEM…DEMESSEEQE (992 aa). N-linked (GlcNAc...) asparagine glycosylation is found at Asn115, Asn123, Asn143, Asn176, and Asn230. Residues 217-259 are disordered; it reads VTKRAKKSVDSGTNSTSEMPEGSGEEAMATTATTTTTESTTPV. Over residues 241 to 257 the composition is skewed to low complexity; it reads EEAMATTATTTTTESTT. N-linked (GlcNAc...) asparagine glycosylation is found at Asn402, Asn710, Asn723, Asn789, Asn894, Asn919, Asn964, and Asn993. A compositionally biased stretch (basic and acidic residues) spans 1069-1080; it reads YLDGKMKGPAKD. Residues 1069–1090 form a disordered region; the sequence is YLDGKMKGPAKDDEMESSEEQE. Acidic residues predominate over residues 1081 to 1090; sequence DEMESSEEQE.

This sequence belongs to the peptidase M1 family.

The protein localises to the membrane. In Caenorhabditis elegans, this protein is Aminopeptidase-like protein AC3.5.